A 2275-amino-acid polypeptide reads, in one-letter code: Serine-rich adhesin for platelets (2275 aa).

Residues 1-89 (MSKRQKEFHD…VNMLHDQQAF (89 aa)) form the signal peptide. Positions 90 to 264 (AASDAPLTSE…TANTITVNKD (175 aa)) are serine-rich repeat region 1, SRR1. Residues 100-111 (LNTQSETVGNQN) show a composition bias toward polar residues. 2 disordered regions span residues 100-229 (LNTQ…STST) and 751-2247 (NSMS…GLLG). Low complexity predominate over residues 112-128 (STTIEASTSTADSTSVT). Residues 129–140 (KNSSSVQTSNSD) show a composition bias toward polar residues. The segment covering 150 to 229 (VTSTTNSTSN…NKTSTTSTST (80 aa)) has biased composition (low complexity). Positions 265–751 (NLKQYMTTSG…TTFKYEVTRN (487 aa)) are non-repeat region (NRR). 2 stretches are compositionally biased toward low complexity: residues 752-1392 (SMSD…LSLS) and 1402-2218 (SNSA…ATSE). A serine-rich repeat region 2, SRR2 region spans residues 752-2236 (SMSDSVSTSG…AQSEKRLPDT (1485 aa)). Residues 2233-2237 (LPDTG) carry the LPXTG sorting signal motif. Threonine 2236 is subject to Pentaglycyl murein peptidoglycan amidated threonine. Residues 2237-2275 (GDSIKQNGLLGGVMTLLVGLGLMKRKKKKDENDQDDSQA) constitute a propeptide, removed by sortase.

It belongs to the serine-rich repeat protein (SRRP) family. In terms of assembly, interacts with human gp-340 (DMBT1). Post-translationally, proteolytically cleaved by a metalloprotease. In terms of processing, glycosylated. It is probable that most of the Ser residues in SSR1 and SSR2 are O-GlcNAcylated. Sequential glycosylation by sugar transferases are able to generate complex sugar polymorphisms.

It localises to the secreted. The protein localises to the cell wall. Functionally, mediates binding to human platelets, possibly through a receptor-ligand interaction. Probably associated with virulence in endovascular infection. Interacts with host (human) gp-340 via the non-repeat region (NRR or binding region). Binding is inhibited by N-acetylneuraminic acid (NeuAc). This chain is Serine-rich adhesin for platelets (sraP), found in Staphylococcus aureus (strain MW2).